Consider the following 302-residue polypeptide: Paired immunoglobulin-like type 2 receptor alpha (302 aa).

The signal sequence occupies residues 1-31 (MALLISLPGGTPAMAQILLLLSSACLHAGNS). At 32-198 (ERSNRKNGFG…GGLDLQTTVG (167 aa)) the chain is on the extracellular side. Residues Asn-90 and Asn-107 are each glycosylated (N-linked (GlcNAc...) asparagine). Residues 199-219 (LATAAAVFLVGVLGLIVFLWW) traverse the membrane as a helical segment. At 220-302 (KRRRQGQKTK…ETVYSIVKAK (83 aa)) the chain is on the cytoplasmic side. The span at 228–248 (TKAEIPAREPLETSEKHESVG) shows a compositional bias: basic and acidic residues. Residues 228–293 (TKAEIPAREP…LPVHGNPQEE (66 aa)) are disordered. 2 consecutive short sequence motifs (ITIM motif) follow at residues 265 to 270 (IVYASI) and 294 to 299 (TVYSIV). The segment covering 270–280 (ISLSSPTSPGT) has biased composition (polar residues).

Interacts with CD99. Post-translationally, phosphorylated on tyrosine residues.

The protein resides in the membrane. Its function is as follows. Paired receptors consist of highly related activating and inhibitory receptors and are widely involved in the regulation of the immune system. Receptor for CD99 and PIANP. The sequence is that of Paired immunoglobulin-like type 2 receptor alpha (Pilra) from Mus musculus (Mouse).